Consider the following 695-residue polypeptide: MGCIFTKPSPEQQKFDGEDYECENKKNLNLISYIRNLLFGNNSHQQLYNEIIPTTTSTTSTTTNSVYQNIGLDGYNNNNNNNNNNNNNNNIMNNYGYDDYGYSYEEDEDYYDEMPIPTIVAQPQPQPQPQPQPQPQPQQPIRIVSQNQQIPTTPPQQISQFNITGNKSPSSIGSRHRSKPKETLRAHKKRHKDGHKMVNEYVFVRKLGKGTFGKVKLAYHHDTHHLYAIKIFNKIRLKKQTMGIGRPNAFDDVLKEIAIMKKMNHINVVKLYEVINDPQEEYIYIVMEYIEGGSIMSANETSEDLARKYFRDIVFGLEYLHEQKVIHKDLKPENLLVNSEGVVKITDFGVSHIFDDDDVVRCSRGSPAFLAPELCRNESQPISGKGVDVWALGVSLYCLIFARTPFISKTNSLLDIYDQIVNHEPTYPREISNDLMDLFKRLLDKNPLTRIQIAEIKSHKWTTISGTWPMNELDHLILSVTDQEMIDAISTDHTIKPSDNTTTDEDDSDLSSSSGGESSGIIGSSNESKSMYNNVNSKQKIQNQNQNQNQNQNQNQNQNQNQNHNQNQNQNQNQNNNNNSLIEKSNISIPASSSSISNNDSCYENRNVYIKDEEMNMICNDSVIMDPIKELNKIDGLNYGCDFQIGKEYSDFQYNSGHFIYDLVDENESQISRESANDYYLPFKTNKYLNNKSIV.

2 disordered regions span residues 119 to 138 and 149 to 192; these read IVAQ…PQPQ and QIPT…KRHK. Pro residues predominate over residues 124–138; the sequence is QPQPQPQPQPQPQPQ. Positions 149–160 are enriched in low complexity; that stretch reads QIPTTPPQQISQ. Over residues 161 to 173 the composition is skewed to polar residues; the sequence is FNITGNKSPSSIG. A Protein kinase domain is found at 201-462; sequence YVFVRKLGKG…IAEIKSHKWT (262 aa). Residues 207–215 and K230 contribute to the ATP site; that span reads LGKGTFGKV. The Proton acceptor role is filled by D329. The interval 491-580 is disordered; it reads TDHTIKPSDN…NQNQNNNNNS (90 aa). Low complexity predominate over residues 510–528; the sequence is LSSSSGGESSGIIGSSNES. Polar residues predominate over residues 529-541; that stretch reads KSMYNNVNSKQKI. Residues 542-580 are compositionally biased toward low complexity; that stretch reads QNQNQNQNQNQNQNQNQNQNQNHNQNQNQNQNQNNNNNS.

It belongs to the protein kinase superfamily. Ser/Thr protein kinase family.

The enzyme catalyses L-seryl-[protein] + ATP = O-phospho-L-seryl-[protein] + ADP + H(+). The catalysed reaction is L-threonyl-[protein] + ATP = O-phospho-L-threonyl-[protein] + ADP + H(+). This is Probable serine/threonine-protein kinase DDB_G0279405 from Dictyostelium discoideum (Social amoeba).